The sequence spans 227 residues: Exodeoxyribonuclease (227 aa).

It catalyses the reaction Exonucleolytic cleavage in the 3'- to 5'-direction to yield nucleoside 5'-phosphates.. In terms of biological role, 3'-5' exonuclease that preferentially uses ssDNA as substrate. Plays a role in group I intron homing. May play a role in the final step of host DNA degradation, by scavenging DNA into mononucleotides. The protein is Exodeoxyribonuclease (dexA) of Escherichia coli (Bacteriophage T4).